Here is a 757-residue protein sequence, read N- to C-terminus: Inhibitor of nuclear factor kappa-B kinase subunit beta (757 aa).

Residues 15 to 300 (WEMKERLGTG…DPQYGPNGCF (286 aa)) form the Protein kinase domain. ATP contacts are provided by residues 21-29 (LGTGGFGNV) and Lys-44. The Proton acceptor role is filled by Asp-145. Lys-163 participates in a covalent cross-link: Glycyl lysine isopeptide (Lys-Gly) (interchain with G-Cter in ubiquitin). At Ser-177 the chain carries Phosphoserine; by TBK1 and PKC/PRKCZ. The residue at position 179 (Cys-179) is an S-nitrosocysteine. Residue Ser-181 is modified to Phosphoserine; by TBK1, PKC/PRKCZ and PDPK1. A Hydroxyproline modification is found at Pro-191. Positions 458-479 (LLRNNSCLSKMKNAMASTAQQL) are leucine-zipper. The residue at position 670 (Ser-670) is a Phosphoserine; by autocatalysis. Position 672 is a phosphoserine (Ser-672). Phosphoserine; by autocatalysis occurs at positions 675, 682, 689, 692, 697, 705, 733, and 740. Positions 683–703 (HPGQLMSQPSSACDSLPESDK) are disordered. The NEMO-binding stretch occupies residues 737–742 (LDWSWL).

This sequence belongs to the protein kinase superfamily. Ser/Thr protein kinase family. I-kappa-B kinase subfamily. In terms of assembly, component of the I-kappa-B-kinase (IKK) core complex consisting of CHUK, IKBKB and IKBKG; probably four alpha/CHUK-beta/IKBKB dimers are associated with four gamma/IKBKG subunits. The IKK core complex seems to associate with regulatory or adapter proteins to form a IKK-signalosome holo-complex. The IKK complex associates with TERF2IP/RAP1, leading to promote IKK-mediated phosphorylation of RELA/p65. Part of a complex composed of NCOA2, NCOA3, CHUK/IKKA, IKBKB, IKBKG and CREBBP. Part of a 70-90 kDa complex at least consisting of CHUK/IKKA, IKBKB, NFKBIA, RELA, ELP1 and MAP3K14. Found in a membrane raft complex, at least composed of BCL10, CARD11, DPP4 and IKBKB. Interacts with SQSTM1 through PRKCZ or PRKCI. Forms an NGF-induced complex with IKBKB, PRKCI and TRAF6. May interact with MAVS/IPS1. Interacts with NALP2. Interacts with TICAM1. Interacts with FAF1; the interaction disrupts the IKK complex formation. Interacts with ATM. Part of a ternary complex consisting of TANK, IKBKB and IKBKG. Interacts with NIBP; the interaction is direct. Interacts with ARRB1 and ARRB2. Interacts with TRIM21. Interacts with NLRC5; prevents IKBKB phosphorylation and kinase activity. Interacts with PDPK1. Interacts with EIF2AK2/PKR. The phosphorylated form interacts with PPM1A and PPM1B. Interacts with ZNF268 isoform 2; the interaction is further increased in a TNF-alpha-dependent manner. Interacts with IKBKE. Interacts with ZC3H12A. Interacts with AKAP13. Interacts with LRRC14; disrupts IKBKB-IKBKG interaction preventing I-kappa-B-kinase (IKK) core complex formation and leading to a decrease of IKBKB phosphorylation and NF-kappaB activation. Interacts with SASH1. Interacts with ARFIP2. Interacts with FKBP5. Interacts with kinase TBK1; the complex interacts with STAT1, leading to phosphorylation of STAT1 on 'Thr-748' by IKBKB. Post-translationally, upon cytokine stimulation, phosphorylated on Ser-177 and Ser-181 by MEKK1 and/or MAP3K14/NIK as well as TBK1 and PRKCZ; which enhances activity. Phosphorylated by MAP3K7/TAK1 in response to NOD1 and NOD2 signaling, promoting activation and phosphorylation of NF-kappa-B inhibitors, leading to NF-kappa-B activation. Once activated, autophosphorylates on the C-terminal serine cluster; which decreases activity and prevents prolonged activation of the inflammatory response. Phosphorylated by the IKK-related kinases TBK1 and IKBKE, which is associated with reduced CHUK/IKKA and IKBKB activity and NF-kappa-B-dependent gene transcription. Dephosphorylated at Ser-177 and Ser-181 by PPM1A and PPM1B. In terms of processing, ubiquitinated. Monoubiquitination involves TRIM21 that leads to inhibition of Tax-induced NF-kappa-B signaling. 'Ser-163' may not serve as a monoubiquitination site. Ubiquitination on 'Ser-163' may modulate phosphorylation on C-terminal serine residues. Hydroxylated by PHD1/EGLN2, loss of hydroxylation under hypoxic conditions results in activation of NF-kappa-B. As to expression, detected in heart (at protein level). Expressed in liver, kidney and spleen.

The protein resides in the cytoplasm. The protein localises to the nucleus. It is found in the membrane raft. The enzyme catalyses L-seryl-[I-kappa-B protein] + ATP = O-phospho-L-seryl-[I-kappa-B protein] + ADP + H(+). It carries out the reaction L-seryl-[protein] + ATP = O-phospho-L-seryl-[protein] + ADP + H(+). It catalyses the reaction L-threonyl-[protein] + ATP = O-phospho-L-threonyl-[protein] + ADP + H(+). In terms of biological role, serine kinase that plays an essential role in the NF-kappa-B signaling pathway which is activated by multiple stimuli such as inflammatory cytokines, bacterial or viral products, DNA damages or other cellular stresses. Acts as a part of the canonical IKK complex in the conventional pathway of NF-kappa-B activation. Phosphorylates inhibitors of NF-kappa-B on 2 critical serine residues. These modifications allow polyubiquitination of the inhibitors and subsequent degradation by the proteasome. In turn, free NF-kappa-B is translocated into the nucleus and activates the transcription of hundreds of genes involved in immune response, growth control, or protection against apoptosis. In addition to the NF-kappa-B inhibitors, phosphorylates several other components of the signaling pathway including NEMO/IKBKG, NF-kappa-B subunits RELA and NFKB1, as well as IKK-related kinases TBK1 and IKBKE. IKK-related kinase phosphorylations may prevent the overproduction of inflammatory mediators since they exert a negative regulation on canonical IKKs. Phosphorylates FOXO3, mediating the TNF-dependent inactivation of this pro-apoptotic transcription factor. Also phosphorylates other substrates including NAA10, NCOA3, BCL10 and IRS1. Phosphorylates RIPK1 at 'Ser-25' which represses its kinase activity and consequently prevents TNF-mediated RIPK1-dependent cell death. Phosphorylates the C-terminus of IRF5, stimulating IRF5 homodimerization and translocation into the nucleus. Following bacterial lipopolysaccharide (LPS)-induced TLR4 endocytosis, phosphorylates STAT1 at 'Thr-748' which restricts interferon signaling and anti-inflammatory responses and promotes innate inflammatory responses. IKBKB-mediated phosphorylation of STAT1 at 'Thr-748' promotes binding of STAT1 to the ARID5A promoter, resulting in transcriptional activation of ARID5A and subsequent ARID5A-mediated stabilization of IL6. It also promotes binding of STAT1 to the IL12B promoter and activation of IL12B transcription. This chain is Inhibitor of nuclear factor kappa-B kinase subunit beta (Ikbkb), found in Mus musculus (Mouse).